Consider the following 144-residue polypeptide: Mediator of RNA polymerase II transcription subunit 21 (144 aa).

Belongs to the Mediator complex subunit 21 family. As to quaternary structure, component of the Mediator complex, which is composed of MED1, MED4, MED6, MED7, MED8, MED9, MED10, MED11, MED12, MED13, MED13L, MED14, MED15, MED16, MED17, MED18, MED19, MED20, MED21, MED22, MED23, MED24, MED25, MED26, MED27, MED29, MED30, MED31, CCNC, CDK8 and CDC2L6/CDK11. The MED12, MED13, CCNC and CDK8 subunits form a distinct module termed the CDK8 module. Mediator containing the CDK8 module is less active than Mediator lacking this module in supporting transcriptional activation. Individual preparations of the Mediator complex lacking one or more distinct subunits have been variously termed ARC, CRSP, DRIP, PC2, SMCC and TRAP. Interacts with PPARG. Interacts with THRA in a ligand-dependent fashion.

Its subcellular location is the nucleus. In terms of biological role, component of the Mediator complex, a coactivator involved in the regulated transcription of nearly all RNA polymerase II-dependent genes. Mediator functions as a bridge to convey information from gene-specific regulatory proteins to the basal RNA polymerase II transcription machinery. Mediator is recruited to promoters by direct interactions with regulatory proteins and serves as a scaffold for the assembly of a functional preinitiation complex with RNA polymerase II and the general transcription factors. The polypeptide is Mediator of RNA polymerase II transcription subunit 21 (MED21) (Macaca fascicularis (Crab-eating macaque)).